Consider the following 243-residue polypeptide: Probable 2-phosphosulfolactate phosphatase (243 aa).

This sequence belongs to the ComB family. It depends on Mg(2+) as a cofactor.

The enzyme catalyses (2R)-O-phospho-3-sulfolactate + H2O = (2R)-3-sulfolactate + phosphate. This Prochlorococcus marinus (strain MIT 9313) protein is Probable 2-phosphosulfolactate phosphatase.